Consider the following 258-residue polypeptide: 5'-nucleotidase SurE (258 aa).

Asp-10, Asp-11, Ser-41, and Asn-96 together coordinate a divalent metal cation.

It belongs to the SurE nucleotidase family. Requires a divalent metal cation as cofactor.

It localises to the cytoplasm. It catalyses the reaction a ribonucleoside 5'-phosphate + H2O = a ribonucleoside + phosphate. Its function is as follows. Nucleotidase that shows phosphatase activity on nucleoside 5'-monophosphates. The sequence is that of 5'-nucleotidase SurE from Sorangium cellulosum (strain So ce56) (Polyangium cellulosum (strain So ce56)).